The following is a 62-amino-acid chain: MEKKFLDAIQQLTKELEMLKKDIDSIKEATVRIDKDLLEYREEISKVKQDDSVLIMQQHKDN.

Residues 1–32 (MEKKFLDAIQQLTKELEMLKKDIDSIKEATVR) are a coiled coil.

The chain is SPbeta prophage-derived uncharacterized protein YonU (yonU) from Bacillus subtilis (strain 168).